Consider the following 189-residue polypeptide: MTNSSIDSKSDLIRRDPVLGSRRLSNYWWATVILVGASGFFLVGISSYFGFNLVPFIKSEEILFIPQGLVMSFYGVAGILLSVYLWLTIIWNVGEGYNEYNKQDGIVRIFRWGFPGKNRRIDLVYPIQDVQAIRVEIKEGINPRRVIYLKIKGKREIPLTRIGQPLTLGEIEEKAANLARFLQVSIEGL.

The next 2 helical transmembrane spans lie at 31–51 (TVILVGASGFFLVGISSYFGF) and 70–90 (VMSFYGVAGILLSVYLWLTII).

Belongs to the Ycf4 family.

It localises to the plastid. It is found in the chloroplast thylakoid membrane. Its function is as follows. Seems to be required for the assembly of the photosystem I complex. This chain is Photosystem I assembly protein Ycf4, found in Chlorokybus atmophyticus (Soil alga).